Reading from the N-terminus, the 321-residue chain is Glucokinase (321 aa).

ATP is bound at residue 8 to 13 (GDVGGT).

The protein belongs to the bacterial glucokinase family.

The protein resides in the cytoplasm. It catalyses the reaction D-glucose + ATP = D-glucose 6-phosphate + ADP + H(+). The protein is Glucokinase of Erwinia tasmaniensis (strain DSM 17950 / CFBP 7177 / CIP 109463 / NCPPB 4357 / Et1/99).